The sequence spans 304 residues: Ribonuclease Z (304 aa).

7 residues coordinate Zn(2+): histidine 63, histidine 65, aspartate 67, histidine 68, histidine 143, aspartate 213, and histidine 271. Aspartate 67 serves as the catalytic Proton acceptor.

Belongs to the RNase Z family. Homodimer. Zn(2+) serves as cofactor.

It carries out the reaction Endonucleolytic cleavage of RNA, removing extra 3' nucleotides from tRNA precursor, generating 3' termini of tRNAs. A 3'-hydroxy group is left at the tRNA terminus and a 5'-phosphoryl group is left at the trailer molecule.. Zinc phosphodiesterase, which displays some tRNA 3'-processing endonuclease activity. Probably involved in tRNA maturation, by removing a 3'-trailer from precursor tRNA. The sequence is that of Ribonuclease Z from Bacteroides fragilis (strain YCH46).